The chain runs to 450 residues: Chromosomal replication initiator protein DnaA (450 aa).

Positions 1 to 84 (MENIHDLWDR…AVKFIIPPNQ (84 aa)) are domain I, interacts with DnaA modulators. The domain II stretch occupies residues 84 to 111 (QADEKLELPSSAKKQRKPYEEANDFPQS). The interval 112 to 328 (MLNPKYTFDT…GALIRVVAYS (217 aa)) is domain III, AAA+ region. G156, G158, K159, and T160 together coordinate ATP. Positions 329-450 (SLINKEITAD…KEIQEKLKQL (122 aa)) are domain IV, binds dsDNA.

Belongs to the DnaA family. As to quaternary structure, oligomerizes as a right-handed, spiral filament on DNA at oriC.

The protein resides in the cytoplasm. In terms of biological role, plays an essential role in the initiation and regulation of chromosomal replication. ATP-DnaA binds to the origin of replication (oriC) to initiate formation of the DNA replication initiation complex once per cell cycle. Binds the DnaA box (a 9 base pair repeat at the origin) and separates the double-stranded (ds)DNA. Forms a right-handed helical filament on oriC DNA; dsDNA binds to the exterior of the filament while single-stranded (ss)DNA is stabiized in the filament's interior. The ATP-DnaA-oriC complex binds and stabilizes one strand of the AT-rich DNA unwinding element (DUE), permitting loading of DNA polymerase. After initiation quickly degrades to an ADP-DnaA complex that is not apt for DNA replication. Binds acidic phospholipids. The polypeptide is Chromosomal replication initiator protein DnaA (Geobacillus thermodenitrificans (strain NG80-2)).